The primary structure comprises 242 residues: uncharacterized protein (242 aa).

This is an uncharacterized protein from Acanthamoeba polyphaga mimivirus (APMV).